A 406-amino-acid polypeptide reads, in one-letter code: Tryptophan 2,3-dioxygenase (406 aa).

Residues Phe-72–His-76 and Arg-144 contribute to the substrate site. His-328 contributes to the heme binding site. Thr-342 contacts substrate.

This sequence belongs to the tryptophan 2,3-dioxygenase family. Homotetramer. Dimer of dimers. Requires heme as cofactor.

It carries out the reaction L-tryptophan + O2 = N-formyl-L-kynurenine. It functions in the pathway amino-acid degradation; L-tryptophan degradation via kynurenine pathway; L-kynurenine from L-tryptophan: step 1/2. In terms of biological role, heme-dependent dioxygenase that catalyzes the oxidative cleavage of the L-tryptophan (L-Trp) pyrrole ring and converts L-tryptophan to N-formyl-L-kynurenine. Catalyzes the oxidative cleavage of the indole moiety. The sequence is that of Tryptophan 2,3-dioxygenase from Xenopus tropicalis (Western clawed frog).